We begin with the raw amino-acid sequence, 314 residues long: Lipoyl synthase (314 aa).

Positions 55, 60, 66, 81, 85, 88, and 292 each coordinate [4Fe-4S] cluster. Residues 67–281 enclose the Radical SAM core domain; the sequence is WEDREATFLI…SAYAEGLGFA (215 aa).

The protein belongs to the radical SAM superfamily. Lipoyl synthase family. [4Fe-4S] cluster serves as cofactor.

It is found in the cytoplasm. It catalyses the reaction [[Fe-S] cluster scaffold protein carrying a second [4Fe-4S](2+) cluster] + N(6)-octanoyl-L-lysyl-[protein] + 2 oxidized [2Fe-2S]-[ferredoxin] + 2 S-adenosyl-L-methionine + 4 H(+) = [[Fe-S] cluster scaffold protein] + N(6)-[(R)-dihydrolipoyl]-L-lysyl-[protein] + 4 Fe(3+) + 2 hydrogen sulfide + 2 5'-deoxyadenosine + 2 L-methionine + 2 reduced [2Fe-2S]-[ferredoxin]. It functions in the pathway protein modification; protein lipoylation via endogenous pathway; protein N(6)-(lipoyl)lysine from octanoyl-[acyl-carrier-protein]: step 2/2. Catalyzes the radical-mediated insertion of two sulfur atoms into the C-6 and C-8 positions of the octanoyl moiety bound to the lipoyl domains of lipoate-dependent enzymes, thereby converting the octanoylated domains into lipoylated derivatives. This Mycolicibacterium smegmatis (strain ATCC 700084 / mc(2)155) (Mycobacterium smegmatis) protein is Lipoyl synthase.